The chain runs to 172 residues: Large ribosomal subunit protein eL20A (172 aa).

Residue serine 32 is modified to Phosphoserine. Glycyl lysine isopeptide (Lys-Gly) (interchain with G-Cter in ubiquitin) cross-links involve residues lysine 125, lysine 131, and lysine 149.

The protein belongs to the eukaryotic ribosomal protein eL20 family. Component of the large ribosomal subunit (LSU). Mature yeast ribosomes consist of a small (40S) and a large (60S) subunit. The 40S small subunit contains 1 molecule of ribosomal RNA (18S rRNA) and 33 different proteins (encoded by 57 genes). The large 60S subunit contains 3 rRNA molecules (25S, 5.8S and 5S rRNA) and 46 different proteins (encoded by 81 genes). eL20 forms multiple interactions with RNA and proteins in the central protuberance, connecting components of core functional centers that are located far apart.

It is found in the cytoplasm. Its function is as follows. Component of the ribosome, a large ribonucleoprotein complex responsible for the synthesis of proteins in the cell. The small ribosomal subunit (SSU) binds messenger RNAs (mRNAs) and translates the encoded message by selecting cognate aminoacyl-transfer RNA (tRNA) molecules. The large subunit (LSU) contains the ribosomal catalytic site termed the peptidyl transferase center (PTC), which catalyzes the formation of peptide bonds, thereby polymerizing the amino acids delivered by tRNAs into a polypeptide chain. The nascent polypeptides leave the ribosome through a tunnel in the LSU and interact with protein factors that function in enzymatic processing, targeting, and the membrane insertion of nascent chains at the exit of the ribosomal tunnel. The sequence is that of Large ribosomal subunit protein eL20A from Saccharomyces cerevisiae (strain ATCC 204508 / S288c) (Baker's yeast).